Here is a 230-residue protein sequence, read N- to C-terminus: MTQTSFSDPAVMAELLAKMLWEIKAVHFNAAEPYKLASGMRSPVYIDCRKLLSYPRVRSAVMDFAVATLLRNAGFEQFDCIAGGETAGIPFAALLADRLALPMIYVRKQPKGHGRNAQIEGHMPDGARVLVIEDLTTAGGSMFTFIDAVRAAGGVVDHGIALFFYGIFPQAHQRFENGNVKLHYIATWRNVLAVARDQKLFDDKTLSEVESFLDAPLEWSGRNGGVSTLG.

Residues arginine 107, lysine 108, lysine 111, histidine 113, and 133-141 each bind 5-phospho-alpha-D-ribose 1-diphosphate; that span reads EDLTTAGGS. Threonine 137 is an orotate binding site.

The protein belongs to the purine/pyrimidine phosphoribosyltransferase family. PyrE subfamily. As to quaternary structure, homodimer. It depends on Mg(2+) as a cofactor.

It carries out the reaction orotidine 5'-phosphate + diphosphate = orotate + 5-phospho-alpha-D-ribose 1-diphosphate. It functions in the pathway pyrimidine metabolism; UMP biosynthesis via de novo pathway; UMP from orotate: step 1/2. Functionally, catalyzes the transfer of a ribosyl phosphate group from 5-phosphoribose 1-diphosphate to orotate, leading to the formation of orotidine monophosphate (OMP). In Allorhizobium ampelinum (strain ATCC BAA-846 / DSM 112012 / S4) (Agrobacterium vitis (strain S4)), this protein is Orotate phosphoribosyltransferase.